A 163-amino-acid polypeptide reads, in one-letter code: uncharacterized protein (163 aa).

This is an uncharacterized protein from Caenorhabditis elegans.